Here is a 114-residue protein sequence, read N- to C-terminus: Notch-regulated ankyrin repeat-containing protein (114 aa).

ANK repeat units follow at residues 50 to 79 (EGQT…DIRL) and 83 to 112 (DGWS…YAAS).

The protein belongs to the NRARP family. Interacts with LEF1.

Downstream effector of Notch signaling. Involved in the regulation of liver cancer cells self-renewal. Involved in angiogenesis acting downstream of Notch at branch points to regulate vascular density. Proposed to integrate endothelial Notch and Wnt signaling to control stalk cell proliferation and to stablilize new endothelial connections during angiogenesis. During somitogenesis involved in maintenance of proper somite segmentation and proper numbers of somites and vertebrae. Required for proper anterior-posterior somite patterning. Proposed to function in a negative feedback loop to destabilize Notch 1 intracellular domain (NICD) and down-regulate the Notch signal, preventing expansion of the Notch signal into the anterior somite domain. This Homo sapiens (Human) protein is Notch-regulated ankyrin repeat-containing protein (NRARP).